The chain runs to 472 residues: 23S rRNA (uracil(1939)-C(5))-methyltransferase RlmD (472 aa).

A compositionally biased stretch (basic residues) spans 1–15 (MSRTAPHRRAPKRYK). A disordered region spans residues 1-23 (MSRTAPHRRAPKRYKTPPPAPAH). Positions 23–87 (HVVTGNEPVI…PKFEQAEVVQ (65 aa)) constitute a TRAM domain. 4 residues coordinate [4Fe-4S] cluster: C100, C106, C109, and C188. S-adenosyl-L-methionine contacts are provided by Q296, F325, N330, E346, N374, and D395. The active-site Nucleophile is C428.

The protein belongs to the class I-like SAM-binding methyltransferase superfamily. RNA M5U methyltransferase family. RlmD subfamily.

The catalysed reaction is uridine(1939) in 23S rRNA + S-adenosyl-L-methionine = 5-methyluridine(1939) in 23S rRNA + S-adenosyl-L-homocysteine + H(+). Functionally, catalyzes the formation of 5-methyl-uridine at position 1939 (m5U1939) in 23S rRNA. This chain is 23S rRNA (uracil(1939)-C(5))-methyltransferase RlmD, found in Paraburkholderia xenovorans (strain LB400).